Reading from the N-terminus, the 244-residue chain is tRNA pseudouridine synthase A (244 aa).

The Nucleophile role is filled by D52. A substrate-binding site is contributed by Y110.

The protein belongs to the tRNA pseudouridine synthase TruA family. As to quaternary structure, homodimer.

It catalyses the reaction uridine(38/39/40) in tRNA = pseudouridine(38/39/40) in tRNA. Functionally, formation of pseudouridine at positions 38, 39 and 40 in the anticodon stem and loop of transfer RNAs. The protein is tRNA pseudouridine synthase A of Geobacter sulfurreducens (strain ATCC 51573 / DSM 12127 / PCA).